Consider the following 82-residue polypeptide: ATP synthase subunit c (82 aa).

2 consecutive transmembrane segments (helical) span residues leucine 7–isoleucine 27 and phenylalanine 53–phenylalanine 73.

Belongs to the ATPase C chain family. As to quaternary structure, F-type ATPases have 2 components, F(1) - the catalytic core - and F(0) - the membrane proton channel. F(1) has five subunits: alpha(3), beta(3), gamma(1), delta(1), epsilon(1). F(0) has three main subunits: a(1), b(2) and c(10-14). The alpha and beta chains form an alternating ring which encloses part of the gamma chain. F(1) is attached to F(0) by a central stalk formed by the gamma and epsilon chains, while a peripheral stalk is formed by the delta and b chains.

It is found in the cell inner membrane. Functionally, f(1)F(0) ATP synthase produces ATP from ADP in the presence of a proton or sodium gradient. F-type ATPases consist of two structural domains, F(1) containing the extramembraneous catalytic core and F(0) containing the membrane proton channel, linked together by a central stalk and a peripheral stalk. During catalysis, ATP synthesis in the catalytic domain of F(1) is coupled via a rotary mechanism of the central stalk subunits to proton translocation. In terms of biological role, key component of the F(0) channel; it plays a direct role in translocation across the membrane. A homomeric c-ring of between 10-14 subunits forms the central stalk rotor element with the F(1) delta and epsilon subunits. The sequence is that of ATP synthase subunit c from Leptothrix cholodnii (strain ATCC 51168 / LMG 8142 / SP-6) (Leptothrix discophora (strain SP-6)).